The following is a 170-amino-acid chain: Peptide deformylase (170 aa).

Fe cation contacts are provided by Cys93 and His135. Residue Glu136 is part of the active site. His139 contributes to the Fe cation binding site.

This sequence belongs to the polypeptide deformylase family. Requires Fe(2+) as cofactor.

It catalyses the reaction N-terminal N-formyl-L-methionyl-[peptide] + H2O = N-terminal L-methionyl-[peptide] + formate. Its function is as follows. Removes the formyl group from the N-terminal Met of newly synthesized proteins. Requires at least a dipeptide for an efficient rate of reaction. N-terminal L-methionine is a prerequisite for activity but the enzyme has broad specificity at other positions. This is Peptide deformylase from Acidobacterium capsulatum (strain ATCC 51196 / DSM 11244 / BCRC 80197 / JCM 7670 / NBRC 15755 / NCIMB 13165 / 161).